We begin with the raw amino-acid sequence, 225 residues long: Prepilin leader peptidase/N-methyltransferase (225 aa).

Over 1–2 (MT) the chain is Periplasmic. The chain crosses the membrane as a helical span at residues 3–23 (MLLPLFILVGFIADYFVNAIA). The Cytoplasmic segment spans residues 24–67 (YHLSPLEDKTALTFRQVLVHFRQKKYAWHDTVPLILCVAAAIAC). A helical transmembrane segment spans residues 68–88 (ALAPFTPIVTGALFLYFCFVL). Over 89-103 (TLSVIDFRTQLLPDK) the chain is Periplasmic. A helical membrane pass occupies residues 104-124 (LTLPLLWLGLVFNAQYGLIDL). Residues 125 to 127 (HDA) are Cytoplasmic-facing. Residues 128–148 (VYGAVAGYGVLWCVYWGVWLV) form a helical membrane-spanning segment. Over 149–174 (CHKEGLGYGDFKLLAAAGAWCGWQTL) the chain is Periplasmic. Residues 175 to 195 (PMILLIASLGGIGYAIVSQLL) form a helical membrane-spanning segment. The Cytoplasmic portion of the chain corresponds to 196–202 (QRRTITT). Residues 203 to 223 (IAFGPWLALGSMINLGYLAWI) form a helical membrane-spanning segment. Topologically, residues 224–225 (SY) are periplasmic.

It belongs to the peptidase A24 family.

The protein resides in the cell inner membrane. It catalyses the reaction Typically cleaves a -Gly-|-Phe- bond to release an N-terminal, basic peptide of 5-8 residues from type IV prepilin, and then N-methylates the new N-terminal amino group, the methyl donor being S-adenosyl-L-methionine.. Its function is as follows. Plays a role in type II pseudopili formation by proteolytically removing the leader sequence from substrate proteins and subsequently monomethylating the alpha-amino group of the newly exposed N-terminal phenylalanine. Substrates include proteins required for biogenesis of the type II general secretory apparatus. In Escherichia coli (strain K12), this protein is Prepilin leader peptidase/N-methyltransferase (gspO).